Reading from the N-terminus, the 424-residue chain is CAAX prenyl protease 1 homolog (424 aa).

The next 5 membrane-spanning stretches (helical) occupy residues 3–23 (IPFM…ETYL), 67–87 (EFVT…PWFW), 109–129 (LSFL…FSLY), 155–175 (GTFL…FIVQ), and 185–205 (LWAF…VLIA). His-284 is a Zn(2+) binding site. Glu-285 is a catalytic residue. His-288 contributes to the Zn(2+) binding site. A run of 2 helical transmembrane segments spans residues 295–315 (TYSF…YTLV) and 332–352 (VLIG…LVSF). A Zn(2+)-binding site is contributed by Glu-362. Asp-366 serves as the catalytic Proton donor.

This sequence belongs to the peptidase M48A family. It depends on Zn(2+) as a cofactor. In terms of tissue distribution, expressed in leaves, stems and flowers.

The protein resides in the endoplasmic reticulum membrane. The catalysed reaction is Hydrolyzes the peptide bond -P2-(S-farnesyl or geranylgeranyl)C-P1'-P2'-P3'-COOH where P1' and P2' are amino acids with aliphatic side chains and P3' is any C-terminal residue.. Functionally, proteolytically removes the C-terminal three residues of farnesylated proteins. The substrate specificity is only partially overlapping with that of FACE2. This is CAAX prenyl protease 1 homolog (FACE1) from Arabidopsis thaliana (Mouse-ear cress).